The sequence spans 367 residues: D-alanine--D-alanine ligase (367 aa).

An ATP-grasp domain is found at 148–357 (KMAFEQAGLP…FPELVDKLVQ (210 aa)). 184 to 239 (EASLGYPCFVKPANLGSSVGISKVRSRQELEDALDNAANYDRRIIVEAGVVAREVE) is an ATP binding site. Mg(2+)-binding residues include aspartate 310, glutamate 324, and asparagine 326.

Belongs to the D-alanine--D-alanine ligase family. It depends on Mg(2+) as a cofactor. Requires Mn(2+) as cofactor.

The protein localises to the cytoplasm. The enzyme catalyses 2 D-alanine + ATP = D-alanyl-D-alanine + ADP + phosphate + H(+). It functions in the pathway cell wall biogenesis; peptidoglycan biosynthesis. Its function is as follows. Cell wall formation. The protein is D-alanine--D-alanine ligase of Trichormus variabilis (strain ATCC 29413 / PCC 7937) (Anabaena variabilis).